We begin with the raw amino-acid sequence, 69 residues long: MQKDIHLKMEPLKITCSTCFTSFDIVSSRKTIAIDICSKCHPFYTGDRTLAKATGQIDKFQKRLQKKQK.

The protein belongs to the bacterial ribosomal protein bL31 family. Type A subfamily. In terms of assembly, part of the 50S ribosomal subunit.

Binds the 23S rRNA. The sequence is that of Large ribosomal subunit protein bL31 from Mycoplasmopsis pulmonis (strain UAB CTIP) (Mycoplasma pulmonis).